The sequence spans 372 residues: Pyruvylated Gal-beta-1,3-epitope synthesis protein 5 (372 aa).

At 1-12 the chain is on the cytoplasmic side; that stretch reads MGLPLRIFAGNG. Residues 13–35 traverse the membrane as a helical; Signal-anchor for type II membrane protein segment; it reads IGGWCLRLFLFGSLILLLRPLIF. Topologically, residues 36-372 are lumenal; it reads YSNTTMKKLK…LRIIEQWKQL (337 aa). N-linked (GlcNAc...) asparagine glycosylation is found at Asn-38 and Asn-128.

It is found in the golgi apparatus membrane. In terms of biological role, involved in cell wall biogenesis. Has a role in the addition of Gal-beta1,3 moeities to galactomannans and their subsequent pyruvylation. Has a role in meiosis. The chain is Pyruvylated Gal-beta-1,3-epitope synthesis protein 5 (pvg5) from Schizosaccharomyces pombe (strain 972 / ATCC 24843) (Fission yeast).